The sequence spans 346 residues: FMRFamide-related peptides type HF-1 (346 aa).

Residues 1–19 (MTSLCLTIAPAVLSLICLS) form the signal peptide. Positions 20 to 45 (SYGWAEDNNGIHTLDDGDNDPFFRHN) are excised as a propeptide. Phenylalanine amide is present on Phe-51. Positions 54 to 94 (AFVPLWDNADDSLVRKNLLTHWSEFPLSPALSSSDVFSRNS) are excised as a propeptide. Position 100 is a phenylalanine amide (Phe-100). Residues 103-109 (SYPPYQD) constitute a propeptide that is removed on maturation. Phe-115 is modified (phenylalanine amide). The propeptide occupies 118-203 (SHQPDIDEYL…EILSNEDDLE (86 aa)). A disordered region spans residues 137–185 (YRKRRSEDGDSKEDGLNRVARSADANQQSKNTQSNKFGKDLQKRETKKE). The span at 141–152 (RSEDGDSKEDGL) shows a compositional bias: basic and acidic residues. Residues 160–172 (DANQQSKNTQSNK) show a composition bias toward polar residues. Residues 173 to 185 (FGKDLQKRETKKE) show a composition bias toward basic and acidic residues. 2 positions are modified to phenylalanine amide: Phe-209 and Phe-216. Residues 219–226 (GDEDESYD) constitute a propeptide that is removed on maturation. At Phe-232 the chain carries Phenylalanine amide. The propeptide occupies 235–243 (SLRHDQEFE). Phenylalanine amide occurs at positions 249 and 256. Residues 259-267 (GDEDDAREE) constitute a propeptide that is removed on maturation. At Phe-273 the chain carries Phenylalanine amide. Residues 276 to 283 (SSNEDEDI) constitute a propeptide that is removed on maturation. Phe-290 carries the phenylalanine amide modification. The propeptide occupies 293–301 (SGNEDGDVD). Residues Phe-307 and Phe-314 each carry the phenylalanine amide modification. Residues 317–325 (SEKEDGDVD) constitute a propeptide that is removed on maturation. Phe-331 and Phe-338 each carry phenylalanine amide. A propeptide spanning residues 341–346 (GDSETS) is cleaved from the precursor.

Belongs to the FARP (FMRFamide related peptide) family. Central nervous system.

It localises to the secreted. Its function is as follows. Can function as both cardioregulatory hormones and transmitters and may regulate cardiovascular function. The polypeptide is FMRFamide-related peptides type HF-1 (Cornu aspersum (Brown garden snail)).